A 1088-amino-acid polypeptide reads, in one-letter code: Insulin receptor substrate 1-B (1088 aa).

The region spanning 15–117 (DVRKVGYLRK…WYQALVDLHN (103 aa)) is the PH domain. Y48 bears the Phosphotyrosine mark. Residues 155–259 (FKEVWQVIMK…EAMKALSDEF (105 aa)) enclose the IRS-type PTB domain. Positions 259-428 (FRPRSKSQSS…GGFISSDEYG (170 aa)) are disordered. Composition is skewed to low complexity over residues 264 to 278 (KSQSSSNCSNPISVP), 302 to 312 (SATATSPAGGA), 379 to 400 (SPSATSPVSLSSSSTSGHGSTS), and 408 to 420 (SSASISGSPSDGG). Position 307 is a phosphoserine (S307). Y460 carries the phosphotyrosine; by INSR modification. The short motif at 460 to 463 (YICM) is the YXXM motif 1 element. Composition is skewed to polar residues over residues 466 to 479 (SSSHLQRGPQQRYQ) and 499 to 516 (SSGTSPPTVSHQKTPSQS). Disordered stretches follow at residues 466–485 (SSSHLQRGPQQRYQPSRGEE) and 496–516 (RTHSSGTSPPTVSHQKTPSQS). Short sequence motifs (YXXM motif) lie at residues 521 to 524 (YTEM), 567 to 570 (YMPM), 584 to 587 (YMPM), 612 to 615 (YMMM), and 654 to 657 (YINM). Y567 and Y584 each carry phosphotyrosine; by INSR. Residue Y612 is modified to Phosphotyrosine. Positions 704 to 785 (NLRISANSGH…PPEPKSPGEY (82 aa)) are disordered. A compositionally biased stretch (polar residues) spans 707–718 (ISANSGHNLYTE). Low complexity predominate over residues 719-729 (DSSSSSTSSDS). Residues Y785 and Y823 each carry the phosphotyrosine; by INSR modification. The tract at residues 785 to 787 (YVN) is GRB2-binding. The YXXM motif 7 signature appears at 823–826 (YMNM). A compositionally biased stretch (polar residues) spans 840–863 (TSSYEPPNKPVNSVCPTETCSSSR). Residues 840–868 (TSSYEPPNKPVNSVCPTETCSSSRPPIRG) are disordered. Phosphotyrosine; by INSR is present on Y875. 2 short sequence motifs (YXXM motif) span residues 875-878 (YMSM) and 909-912 (YAEM). A disordered region spans residues 935 to 1006 (ASRSSLLGQG…SGEDVKRHSS (72 aa)). 2 stretches are compositionally biased toward polar residues: residues 946-961 (GPSAFTRVSLSPNRNP) and 980-995 (ETFSSTPTTARVTTGP). Phosphotyrosine; by INSR occurs at positions 1037 and 1069.

As to quaternary structure, interacts with the NPXY motif of tyrosine-phosphorylated igf1r and insr via the PTB domain. Binds to phosphatidylinositol 3-kinase p85 subunit at a low level in vitro prior to phosphorylation. Binding is greatly enhanced following tyrosine phosphorylation by insr and probably occurs via the phosphorylated YXXM motifs. Phosphorylation of Tyr-785 is required for grb2-binding.

May mediate the control of various cellular processes by insulin. When phosphorylated by the insulin receptor binds specifically to various cellular proteins containing SH2 domains such as phosphatidylinositol 3-kinase p85 subunit or grb2. Activates phosphatidylinositol 3-kinase when bound to the regulatory p85 subunit. The polypeptide is Insulin receptor substrate 1-B (irs1-b) (Xenopus laevis (African clawed frog)).